The following is a 318-amino-acid chain: tRNA-cytidine(32) 2-sulfurtransferase (318 aa).

The PP-loop motif signature appears at 52–57; that stretch reads SGGKDS. Residues cysteine 127, cysteine 130, and cysteine 218 each coordinate [4Fe-4S] cluster.

Belongs to the TtcA family. Homodimer. Requires Mg(2+) as cofactor. [4Fe-4S] cluster serves as cofactor.

It is found in the cytoplasm. The enzyme catalyses cytidine(32) in tRNA + S-sulfanyl-L-cysteinyl-[cysteine desulfurase] + AH2 + ATP = 2-thiocytidine(32) in tRNA + L-cysteinyl-[cysteine desulfurase] + A + AMP + diphosphate + H(+). It functions in the pathway tRNA modification. Functionally, catalyzes the ATP-dependent 2-thiolation of cytidine in position 32 of tRNA, to form 2-thiocytidine (s(2)C32). The sulfur atoms are provided by the cysteine/cysteine desulfurase (IscS) system. The chain is tRNA-cytidine(32) 2-sulfurtransferase from Actinobacillus pleuropneumoniae serotype 7 (strain AP76).